Consider the following 141-residue polypeptide: Hemoglobin subunit alpha (141 aa).

Positions Val1–Arg141 constitute a Globin domain. Ser3 is subject to Phosphoserine. At Lys7 the chain carries N6-succinyllysine. A Phosphothreonine modification is found at Thr8. Lys11 bears the N6-succinyllysine mark. Position 16 is an N6-acetyllysine; alternate (Lys16). Lys16 carries the post-translational modification N6-succinyllysine; alternate. Tyr24 carries the post-translational modification Phosphotyrosine. Phosphoserine is present on Ser35. Lys40 carries the N6-succinyllysine modification. Residue Ser49 is modified to Phosphoserine. His58 lines the O2 pocket. His87 is a binding site for heme b. Ser102 is modified (phosphoserine). Phosphothreonine is present on Thr108. Phosphoserine is present on residues Ser124 and Ser131. Thr134 is subject to Phosphothreonine. A Phosphoserine modification is found at Ser138.

Belongs to the globin family. In terms of assembly, heterotetramer of two alpha chains and two beta chains. Red blood cells.

Functionally, involved in oxygen transport from the lung to the various peripheral tissues. In terms of biological role, hemopressin acts as an antagonist peptide of the cannabinoid receptor CNR1. Hemopressin-binding efficiently blocks cannabinoid receptor CNR1 and subsequent signaling. The polypeptide is Hemoglobin subunit alpha (HBA) (Myotis velifer (Mouse-eared bat)).